We begin with the raw amino-acid sequence, 222 residues long: Lipid transferase CIDEC (222 aa).

Residues 1-19 are compositionally biased toward polar residues; that stretch reads MAMYTAVSTSVVTQQQLSE. 2 disordered regions span residues 1–33 and 203–222; these read MAMY…CRVT and EQPP…KMLQ. Residues 1 to 33 form a required for liquid-liquid phase separation (LLPS) region; it reads MAMYTAVSTSVVTQQQLSEPSAEAPRARPCRVT. A CIDE-N domain is found at 26–103; that stretch reads RARPCRVTTA…VLHKGQKWQP (78 aa).

This sequence belongs to the CIDE family. As to quaternary structure, homodimer. Homooligomer; undergoes liquid-liquid phase separation (LLPS) via its N-terminus, facilitating lipid droplet fusion, occurs at the lipid droplet contact sites. Interacts with CIDEA. Interacts with PLIN1. Interacts with NFAT5; this interaction is direct and retains NFAT5 in the cytoplasm. Interacts with CEBPB. Interacts with isoform CLSTN3beta of CLSTN3; inhibiting the lipid transferase activity of CIDEC. Post-translationally, ubiquitinated and targeted to proteasomal degradation, resulting in a short half-life (about 15 minutes in 3T3-L1 cells). Protein stability depends on triaclyglycerol synthesis, fatty acid availability and lipid droplet formation.

The protein localises to the lipid droplet. It localises to the endoplasmic reticulum. Its subcellular location is the nucleus. The enzyme catalyses a triacyl-sn-glycerol(in) = a triacyl-sn-glycerol(out). Lipid transferase specifically expressed in white adipose tissue, which promotes unilocular lipid droplet formation by mediating lipid droplet fusion. Lipid droplet fusion promotes their enlargement, restricting lipolysis and favoring lipid storage. Localizes on the lipid droplet surface, at focal contact sites between lipid droplets, and mediates atypical lipid droplet fusion by undergoing liquid-liquid phase separation (LLPS) and promoting directional net neutral lipid transfer from the smaller to larger lipid droplets. The transfer direction may be driven by the internal pressure difference between the contacting lipid droplet pair. Its role in neutral lipid transfer and lipid droplet enlargement is activated by the interaction with PLIN1. May also act as a CEBPB coactivator in the white adipose tissue to control the expression of a subset of CEBPB downstream target genes, including SOCS1, SOCS3, TGFB1, TGFBR1, ID2 and XDH. When overexpressed in preadipocytes, induces apoptosis or increases cell susceptibility to apoptosis induced by serum deprivation or TGFB treatment. The sequence is that of Lipid transferase CIDEC from Bos taurus (Bovine).